We begin with the raw amino-acid sequence, 481 residues long: Endonuclease Bax1 (481 aa).

Residues 1–136 (MLPWELARFS…EKKIIKAPTI (136 aa)) are N-terminal domain (NTD). Residues 158–250 (YKLTVYVSSN…LKLANFKELK (93 aa)) form a central domain (CRD) region. Residues 260 to 364 (DSSVEEKFYK…YKRKIDISLV (105 aa)) form a nuclease domain (NUS) region. A divalent metal cation contacts are provided by glutamate 265, aspartate 297, and glutamate 310. The C-terminal domain (CTD) stretch occupies residues 414–481 (PGYIFLKNYY…AIVIKDKKVN (68 aa)).

Belongs to the Bax1 family. In terms of assembly, homodimer in solution, forms a heterodimer with XPB2. Requires a divalent metal cation as cofactor.

Its function is as follows. A dual DNA endonuclease probably involved in nucleotide excision repair (NER). The N-terminal nuclease domain (NTD) of the XPB2-Bax1 complex cleaves on one side of a DNA bubble (which presumably mimics DNA damage), while the NUS nuclease domain cleaves the other side, respectively called 5' and 3' nuclease activities. Interaction with XPB blocks the NTD nuclease activity. Binds to and stimulates the ATPase activity (and probably also helicase activity) of XPB2. Increases affinity of XPB2 for forked DNA. Does not stimulate the DNA-dependent activity of XPB1. In an XPB2-Bax1-bubble DNA crystal (12 bp of dsDNA, a 6 base bubble and 6 bp of dsDNA) the short 6 bp arm is unwound. The 2 helicase and the ThM domains of XPB2 with the NTD and CRD domains of Bax1 encircle the DNA, forming a tunnel where the 12 bp dsDNA and the ds-ssDNA junction are located. The ThM domain is wedged between the ssDNA tails, with the 5' ssDNA contacting Bax1 and the 3' ssDNA in a channel in XPB2. The nuclease domain (NUS) of Bax1 does not contact DNA in the bubble DNA complex. This chain is Endonuclease Bax1, found in Sulfurisphaera tokodaii (strain DSM 16993 / JCM 10545 / NBRC 100140 / 7) (Sulfolobus tokodaii).